Here is a 662-residue protein sequence, read N- to C-terminus: Envelope glycoprotein (662 aa).

The first 34 residues, 1–34, serve as a signal peptide directing secretion; sequence MEGPTHPKPSKDKTFSWDLMILVGVLLRLDVGMA. The Extracellular segment spans residues 35-606; it reads NPSPHQIYNV…FNKSPWFTTL (572 aa). N-linked (GlcNAc...) asparagine; by host glycosylation is found at asparagine 43 and asparagine 58. Cystine bridges form between cysteine 115–cysteine 132 and cysteine 124–cysteine 137. The segment at 251 to 281 is disordered; the sequence is VLPDQKPPSRQSQIESRVTPHHSQGNGGTPG. The segment covering 258 to 274 has biased composition (polar residues); sequence PSRQSQIESRVTPHHSQ. N-linked (GlcNAc...) asparagine; by host glycosylation is found at asparagine 286, asparagine 322, and asparagine 327. Disulfide bonds link cysteine 332–cysteine 335, cysteine 332–cysteine 559, and cysteine 551–cysteine 558. The CXXC signature appears at 332–335; that stretch reads CWLC. Asparagine 351, asparagine 354, and asparagine 430 each carry an N-linked (GlcNAc...) asparagine; by host glycan. Positions 468-488 are fusion peptide; the sequence is ISLTVALMLGGLTVGGIAAGV. Coiled-coil stretches lie at residues 496–545 and 555–591; these read LETA…ILFL and KEECCFYADHTGLVRDNMAKLRERLKQRQQLFDSQQG. The interval 534–550 is immunosuppression; sequence LQNRRGLDILFLQEGGL. The short motif at 551-559 is the CX6CC element; it reads CAALKEECC. Residues 607-627 traverse the membrane as a helical segment; the sequence is ISSIMGPLLILLLILLFGPCI. Residue cysteine 626 is the site of S-palmitoyl cysteine; by host attachment. Residues 628-662 are Cytoplasmic-facing; the sequence is LNRLVQFVKDRISVVQALILTQQYQQIKQYDPDQP.

As to quaternary structure, the mature envelope protein (Env) consists of a trimer of SU-TM heterodimers attached by a labile interchain disulfide bond. In terms of processing, specific enzymatic cleavages in vivo yield mature proteins. Envelope glycoproteins are synthesized as an inactive precursor that is N-glycosylated and processed likely by host cell furin or by a furin-like protease in the Golgi to yield the mature SU and TM proteins. The cleavage site between SU and TM requires the minimal sequence [KR]-X-[KR]-R. The R-peptide is released from the C-terminus of the cytoplasmic tail of the TM protein upon particle formation as a result of proteolytic cleavage by the viral protease. Cleavage of this peptide is required for TM to become fusogenic. The CXXC motif is highly conserved across a broad range of retroviral envelope proteins. It is thought to participate in the formation of a labile disulfide bond possibly with the CX6CC motif present in the transmembrane protein. Isomerization of the intersubunit disulfide bond to an SU intrachain disulfide bond is thought to occur upon receptor recognition in order to allow membrane fusion. Post-translationally, the transmembrane protein is palmitoylated. In terms of processing, the R-peptide is palmitoylated.

It localises to the virion membrane. The protein localises to the host cell membrane. The surface protein (SU) attaches the virus to the host cell by binding to its receptor. This interaction triggers the refolding of the transmembrane protein (TM) and is thought to activate its fusogenic potential by unmasking its fusion peptide. Fusion occurs at the host cell plasma membrane. Functionally, the transmembrane protein (TM) acts as a class I viral fusion protein. Under the current model, the protein has at least 3 conformational states: pre-fusion native state, pre-hairpin intermediate state, and post-fusion hairpin state. During viral and target cell membrane fusion, the coiled coil regions (heptad repeats) assume a trimer-of-hairpins structure, positioning the fusion peptide in close proximity to the C-terminal region of the ectodomain. The formation of this structure appears to drive apposition and subsequent fusion of viral and target cell membranes. Membranes fusion leads to delivery of the nucleocapsid into the cytoplasm. The sequence is that of Envelope glycoprotein (env) from Felis catus (Cat).